Consider the following 237-residue polypeptide: CDP-diacylglycerol--serine O-phosphatidyltransferase (237 aa).

The next 8 membrane-spanning stretches (helical) occupy residues 3-23 (INPL…LGMM), 25-45 (IFYA…ASLI), 73-93 (VVAF…YNFG), 95-115 (IGMA…ARFN), 124-144 (YSFI…CVLL), 150-170 (FLEG…GVLM), 184-204 (WNLK…VRPL), and 207-227 (LSVF…FLMV).

Belongs to the CDP-alcohol phosphatidyltransferase class-I family.

It localises to the cell membrane. The catalysed reaction is a CDP-1,2-diacyl-sn-glycerol + L-serine = a 1,2-diacyl-sn-glycero-3-phospho-L-serine + CMP + H(+). This chain is CDP-diacylglycerol--serine O-phosphatidyltransferase (pssA), found in Helicobacter pylori (strain J99 / ATCC 700824) (Campylobacter pylori J99).